The sequence spans 183 residues: uncharacterized protein (183 aa).

The segment at 136 to 183 (EPPASVPSKQSGRSDKKKSTRKSPTFRNRPDFRKNKGRQLNKTTKQKK) is disordered. The segment covering 170–183 (NKGRQLNKTTKQKK) has biased composition (basic residues).

This is an uncharacterized protein from Homo sapiens (Human).